The sequence spans 807 residues: Putative transmembrane protein ORF807 (807 aa).

Helical transmembrane passes span 210–230 (VLML…SDIL), 234–254 (GLST…IVYF), 270–290 (VTIQ…FVIL), 459–479 (ILIG…LVLT), and 657–677 (VALL…MPLV).

The protein localises to the host membrane. This Acidianus filamentous virus 1 (isolate United States/Yellowstone) (AFV-1) protein is Putative transmembrane protein ORF807.